Consider the following 297-residue polypeptide: MKVNGVEVEETFAEAFDIKIARVLITGYDYYWAWVAANEATGFGTSVIMCPAEAGIEIKAKPSETPDGRPGYYIQICHMSKKGLEEQLLARLGQCVLTAPTTAVFNGLPDAEEKFDTGFKLKFFADGYEKEVEVGGRKCWAVPMMEGDFIIENDIGYTNGIAGGNFFIMAETQPSALAAAKAAVDAISDVEGVITPFPGGIVASGSKVGANKYKFLKASTNEKFAPSIRDQVEGTQIPEGVKAVYEIVINGLNADAIKEATRVGILAATKIPGVVKITAGNYGGKLGKHIINLNELF.

The protein belongs to the FTR family. As to quaternary structure, homotetramer.

It is found in the cytoplasm. The catalysed reaction is N-formylmethanofuran + 5,6,7,8-tetrahydromethanopterin + H(+) = N(5)-formyl-5,6,7,8-tetrahydromethanopterin + methanofuran. The protein operates within metabolic intermediate metabolism; lactate oxidation. Its function is as follows. Catalyzes the transfer of a formyl group from 5-formyl tetrahydromethanopterin (5-formyl-H(4)MPT) to methanofuran (MFR) to produce formylmethanofuran (formyl-MFR) and tetrahydromethanopterin (H(4)MPT). The chain is Formylmethanofuran--tetrahydromethanopterin formyltransferase from Archaeoglobus fulgidus (strain ATCC 49558 / DSM 4304 / JCM 9628 / NBRC 100126 / VC-16).